The primary structure comprises 132 residues: Phosphomevalonate dehydratase small subunit (132 aa).

S62 serves as the catalytic Proton acceptor.

The protein belongs to the AcnX type II small subunit family. In terms of assembly, heterodimer composed of a large subunit (PMDh-L) and a small subunit (PMDh-S).

The catalysed reaction is (R)-5-phosphomevalonate = (2E)-3-methyl-5-phosphooxypent-2-enoate + H2O. It functions in the pathway isoprenoid biosynthesis; isopentenyl diphosphate biosynthesis via mevalonate pathway. In terms of biological role, component of a hydro-lyase that catalyzes the dehydration of mevalonate 5-phosphate (MVA5P) to form trans-anhydromevalonate 5-phosphate (tAHMP). Involved in the archaeal mevalonate (MVA) pathway, which provides fundamental precursors for isoprenoid biosynthesis, such as isopentenyl diphosphate (IPP) and dimethylallyl diphosphate (DMAPP). The chain is Phosphomevalonate dehydratase small subunit from Methanocella arvoryzae (strain DSM 22066 / NBRC 105507 / MRE50).